We begin with the raw amino-acid sequence, 147 residues long: uncharacterized protein (147 aa).

Residues 51–72 are disordered; the sequence is VTSSMSVMNDSEECPLINGPSM.

This is an uncharacterized protein from Gallid herpesvirus 2 (strain GA) (GaHV-2).